Reading from the N-terminus, the 979-residue chain is Protocadherin alpha-9 (979 aa).

Residues 1–59 (MRLGNRPEDIRTCVHLRWHIHGLLRQENASVVISKCLRHGAWRLLLWLLLLATWDVGSG) form the signal peptide. The Extracellular portion of the chain corresponds to 60–726 (QLHYSVPEEA…RREASLMDVN (667 aa)). 6 Cadherin domains span residues 64 to 163 (SVPE…PPIF), 164 to 272 (SVAE…APVF), 273 to 380 (DRSV…APEI), 381 to 485 (VLTS…APAF), 486 to 595 (AHPE…PPTL), and 611 to 707 (VSRS…VPKA). 2 N-linked (GlcNAc...) asparagine glycosylation sites follow: N287 and N295. The N-linked (GlcNAc...) asparagine glycan is linked to N578. Residues 727–747 (VYLIIAICAVSSLLVLTLLLY) traverse the membrane as a helical segment. Residues 748–979 (TALRCSAVPM…GNSTTDNSDQ (232 aa)) are Cytoplasmic-facing. PXXP repeat units lie at residues 763–766 (LGKP), 828–831 (PRQP), 861–864 (PGGP), 902–905 (PGNP), and 920–923 (PGSP). The tract at residues 763-923 (LGKPTLVCSS…PDKFIIPGSP (161 aa)) is 5 X 4 AA repeats of P-X-X-P. The segment at 859-979 (AGPGGPDQQW…GNSTTDNSDQ (121 aa)) is disordered. Residues 938–952 (DKSDFITFGKKEETK) are compositionally biased toward basic and acidic residues.

It is found in the cell membrane. Functionally, potential calcium-dependent cell-adhesion protein. May be involved in the establishment and maintenance of specific neuronal connections in the brain. This chain is Protocadherin alpha-9, found in Mus musculus (Mouse).